Reading from the N-terminus, the 415-residue chain is Phosphoglycerate transport system transcriptional regulatory protein PgtA (415 aa).

Positions 7–121 (SILLIDDDVD…KLLILIEDAL (115 aa)) constitute a Response regulatory domain. Residue Asp-56 is modified to 4-aspartylphosphate. The Sigma-54 factor interaction domain maps to 142-341 (LIGRSEWMNQ…LANAAELFAV (200 aa)). 170 to 177 (GEHGTGRM) is an ATP binding site. A DNA-binding region (H-T-H motif) is located at residues 385–404 (INEVAEYLQIPRKKLYLRMK).

Phosphorylated by PgtB.

The protein resides in the cytoplasm. Its function is as follows. Member of the two-component regulatory system PgtB/PgtA that regulates the inducible phosphoglycerate transport system. When activated by PgtB it acts in conjunction with sigma-54 as a transcriptional activator. The sequence is that of Phosphoglycerate transport system transcriptional regulatory protein PgtA (pgtA) from Salmonella typhimurium (strain LT2 / SGSC1412 / ATCC 700720).